The following is a 432-amino-acid chain: Glutamate-1-semialdehyde 2,1-aminomutase 2 (432 aa).

Lys268 is modified (N6-(pyridoxal phosphate)lysine).

It belongs to the class-III pyridoxal-phosphate-dependent aminotransferase family. HemL subfamily. As to quaternary structure, homodimer. Pyridoxal 5'-phosphate is required as a cofactor.

It is found in the cytoplasm. It catalyses the reaction (S)-4-amino-5-oxopentanoate = 5-aminolevulinate. It participates in porphyrin-containing compound metabolism; protoporphyrin-IX biosynthesis; 5-aminolevulinate from L-glutamyl-tRNA(Glu): step 2/2. This Listeria innocua serovar 6a (strain ATCC BAA-680 / CLIP 11262) protein is Glutamate-1-semialdehyde 2,1-aminomutase 2.